The primary structure comprises 342 residues: UDP-N-acetylglucosamine--N-acetylmuramyl-(pentapeptide) pyrophosphoryl-undecaprenol N-acetylglucosamine transferase (342 aa).

UDP-N-acetyl-alpha-D-glucosamine contacts are provided by residues 10 to 12 (TGG), Asn124, Ser177, and Gln275.

It belongs to the glycosyltransferase 28 family. MurG subfamily.

It is found in the cell inner membrane. It carries out the reaction di-trans,octa-cis-undecaprenyl diphospho-N-acetyl-alpha-D-muramoyl-L-alanyl-D-glutamyl-meso-2,6-diaminopimeloyl-D-alanyl-D-alanine + UDP-N-acetyl-alpha-D-glucosamine = di-trans,octa-cis-undecaprenyl diphospho-[N-acetyl-alpha-D-glucosaminyl-(1-&gt;4)]-N-acetyl-alpha-D-muramoyl-L-alanyl-D-glutamyl-meso-2,6-diaminopimeloyl-D-alanyl-D-alanine + UDP + H(+). The protein operates within cell wall biogenesis; peptidoglycan biosynthesis. Functionally, cell wall formation. Catalyzes the transfer of a GlcNAc subunit on undecaprenyl-pyrophosphoryl-MurNAc-pentapeptide (lipid intermediate I) to form undecaprenyl-pyrophosphoryl-MurNAc-(pentapeptide)GlcNAc (lipid intermediate II). This Campylobacter jejuni subsp. doylei (strain ATCC BAA-1458 / RM4099 / 269.97) protein is UDP-N-acetylglucosamine--N-acetylmuramyl-(pentapeptide) pyrophosphoryl-undecaprenol N-acetylglucosamine transferase.